The primary structure comprises 153 residues: uncharacterized protein (153 aa).

A disordered region spans residues 16-40 (DEQTPLLNNDGIQRTPPSAEADMSL). Residues 20–31 (PLLNNDGIQRTP) are compositionally biased toward polar residues.

This is an uncharacterized protein from Schizosaccharomyces pombe (strain 972 / ATCC 24843) (Fission yeast).